The chain runs to 316 residues: Ribosomal RNA large subunit methyltransferase F (316 aa).

It belongs to the methyltransferase superfamily. METTL16/RlmF family.

It localises to the cytoplasm. The enzyme catalyses adenosine(1618) in 23S rRNA + S-adenosyl-L-methionine = N(6)-methyladenosine(1618) in 23S rRNA + S-adenosyl-L-homocysteine + H(+). Functionally, specifically methylates the adenine in position 1618 of 23S rRNA. This Pseudomonas putida (strain GB-1) protein is Ribosomal RNA large subunit methyltransferase F.